The chain runs to 401 residues: MSALQAVVTLLLCGQLLAVETGSEATADSCPKAPEIANSHVEYSVRYQCDKYYKLHAGNGVYTFNNKQWINKDIGQQLPECEEDDSCPEPPKIENGYVEYLVRYQCKPYYTLRTCGDGVYTFNSKKQWINKNIGQKLPECEAVCGKPKHPVDQVQRIIGGSLDAKGSFPWQAKMVSQHNLISGATLINERWLLTTAKNLYLGHSSDKKAKDITPTLRLYVGKNQLVEVEKVVLHPDHSKVDIGLIKLRQKVPVNDKVMPICLPSKDYVKVGRVGYVSGWGRNENFNFTEHLKYVMLPVADQDKCVKHYEGVDAPKNKTAKSPVGVQPILNENTFCVGLSKYQDDTCYGDAGSAFVVHDKEDDTWYAAGILSFDKSCAVAEYGVYVKVTSILDWVRKTIANN.

The first 18 residues, 1–18, serve as a signal peptide directing secretion; that stretch reads MSALQAVVTLLLCGQLLA. Sushi domains lie at 28–83 and 85–142; these read DSCP…ECEE and DSCP…ECEA. 3 cysteine pairs are disulfide-bonded: Cys49/Cys81, Cys106/Cys140, and Cys144/Cys261. Residues 157-399 enclose the Peptidase S1 domain; it reads IIGGSLDAKG…ILDWVRKTIA (243 aa). Residues Asn286 and Asn316 are each glycosylated (N-linked (GlcNAc...) asparagine). Intrachain disulfides connect Cys304-Cys335 and Cys346-Cys376. Residues 313-318 are interaction with CD163; the sequence is APKNKT.

The protein belongs to the peptidase S1 family. As to quaternary structure, tetramer of two alpha and two beta chains; disulfide-linked. The hemoglobin/haptoglobin complex is composed of a haptoglobin dimer bound to two hemoglobin alpha-beta dimers. Interacts with CD163. Interacts with ERGIC3. As to expression, expressed by the liver and secreted in plasma.

The protein resides in the secreted. Its subcellular location is the extracellular space. Functionally, as a result of hemolysis, hemoglobin is found to accumulate in the kidney and is secreted in the urine. Haptoglobin captures, and combines with free plasma hemoglobin to allow hepatic recycling of heme iron and to prevent kidney damage. Haptoglobin also acts as an antioxidant, has antibacterial activity and plays a role in modulating many aspects of the acute phase response. Hemoglobin/haptoglobin complexes are rapidly cleared by the macrophage CD163 scavenger receptor expressed on the surface of liver Kupfer cells through an endocytic lysosomal degradation pathway. This Bos taurus (Bovine) protein is Haptoglobin (HP).